The chain runs to 652 residues: Acetyl-coenzyme A synthetase (652 aa).

Residues 191–194 (RAGR), T311, and N335 contribute to the CoA site. Residues 387–389 (GEP), 411–416 (DTWWQT), D500, and R515 contribute to the ATP site. Position 523 (S523) interacts with CoA. R526 serves as a coordination point for ATP. Residues V537, H539, and I542 each coordinate Mg(2+). R584 contributes to the CoA binding site. At K609 the chain carries N6-acetyllysine; by autocatalysis.

Belongs to the ATP-dependent AMP-binding enzyme family. Forms a 1:1 complex with CobB/NAD-dependent deacetylase. Mg(2+) serves as cofactor. In terms of processing, autoacetylated. Deacetylation by CobB activates the enzyme.

The catalysed reaction is acetate + ATP + CoA = acetyl-CoA + AMP + diphosphate. Catalyzes the conversion of acetate into acetyl-CoA (AcCoA), an essential intermediate at the junction of anabolic and catabolic pathways. Acs undergoes a two-step reaction. In the first half reaction, Acs combines acetate with ATP to form acetyl-adenylate (AcAMP) intermediate. In the second half reaction, it can then transfer the acetyl group from AcAMP to the sulfhydryl group of CoA, forming the product AcCoA. In terms of biological role, enables the cell to use acetate during aerobic growth to generate energy via the TCA cycle, and biosynthetic compounds via the glyoxylate shunt. Acetylates CheY, the response regulator involved in flagellar movement and chemotaxis. The protein is Acetyl-coenzyme A synthetase of Escherichia coli (strain K12).